Consider the following 117-residue polypeptide: Large ribosomal subunit protein uL18 (117 aa).

The protein belongs to the universal ribosomal protein uL18 family. In terms of assembly, part of the 50S ribosomal subunit; part of the 5S rRNA/L5/L18/L25 subcomplex. Contacts the 5S and 23S rRNAs.

Functionally, this is one of the proteins that bind and probably mediate the attachment of the 5S RNA into the large ribosomal subunit, where it forms part of the central protuberance. The protein is Large ribosomal subunit protein uL18 of Serratia proteamaculans (strain 568).